The following is a 358-amino-acid chain: Probable ABC transporter periplasmic-binding protein y4fP (358 aa).

The signal sequence occupies residues Met-1–Ala-46.

This sequence belongs to the bacterial solute-binding protein 1 family.

The protein resides in the periplasm. Probably part of the binding-protein-dependent transport system y4fNOP. The sequence is that of Probable ABC transporter periplasmic-binding protein y4fP from Sinorhizobium fredii (strain NBRC 101917 / NGR234).